Consider the following 257-residue polypeptide: 3-deoxy-manno-octulosonate cytidylyltransferase (257 aa).

Belongs to the KdsB family.

It is found in the cytoplasm. It catalyses the reaction 3-deoxy-alpha-D-manno-oct-2-ulosonate + CTP = CMP-3-deoxy-beta-D-manno-octulosonate + diphosphate. Its pathway is nucleotide-sugar biosynthesis; CMP-3-deoxy-D-manno-octulosonate biosynthesis; CMP-3-deoxy-D-manno-octulosonate from 3-deoxy-D-manno-octulosonate and CTP: step 1/1. It functions in the pathway bacterial outer membrane biogenesis; lipopolysaccharide biosynthesis. Functionally, activates KDO (a required 8-carbon sugar) for incorporation into bacterial lipopolysaccharide in Gram-negative bacteria. This is 3-deoxy-manno-octulosonate cytidylyltransferase from Xylella fastidiosa (strain M23).